The sequence spans 419 residues: Acyl-[acyl-carrier-protein] hydrolase FATB1, chloroplastic (419 aa).

The transit peptide at 1–50 directs the protein to the chloroplast; the sequence is MVAAAATSAFFPVPAPGTSPKPGKSGNWPSSLSPTFKPKSIPNGGFQVKA. Residues 1–84 are disordered; the sequence is MVAAAATSAF…DTSSSPPPRA (84 aa). Polar residues predominate over residues 61 to 78; the sequence is SAVNLKSGSLNTQEDTSS. Active-site residues include asparagine 315, histidine 317, and cysteine 352. The segment at 390–419 is disordered; that stretch reads SRTEWRPKNAGTNGAISTSTAKTSNGNSVS. A compositionally biased stretch (polar residues) spans 399–419; sequence AGTNGAISTSTAKTSNGNSVS.

This sequence belongs to the acyl-ACP thioesterase family.

It localises to the plastid. The protein localises to the chloroplast. The catalysed reaction is octanoyl-[ACP] + H2O = octanoate + holo-[ACP] + H(+). It catalyses the reaction decanoyl-[ACP] + H2O = decanoate + holo-[ACP] + H(+). Its function is as follows. Plays an essential role in chain termination during de novo fatty acid synthesis. Possesses thioesterase activity for short chain acyl-ACPs. Substrate preference is 8:0 &gt; 10:0. The protein is Acyl-[acyl-carrier-protein] hydrolase FATB1, chloroplastic of Cuphea viscosissima (Blue waxweed).